Consider the following 370-residue polypeptide: MAFAHHAEAAQSSIVSGSAPGFAAGVTGGGDATPVYPTTIDELKEYLTSSSPQNIVIEGTFDFVGSEGTKTYQACNIYDCTPDNGGQAILNTLGGCGDTSTYDVTIDVAGYQGINVASDKTLVGKGTGAVLNGKGLRFVGVSNIIIQNIEITNLNPKYVWGGDALTFSDTNQIWIDHVTTSSLGRQHYSFGQESDNAITISNSFINGKTDYSATCDGHTYWGLELVGSSDQITFYKNYVYYTSGRSPALSGNTLFHAVNSVWADNSGHAIEGTDNGMGLFEGNVFNNVPTIVQSGFVGQLFSSESANLSQCETSLGRDCVTNAYTSSGSFSYDDDGFFVDFENLPIVSAASASSIASTVPSDAGNTLSST.

A disulfide bridge connects residues cysteine 75 and cysteine 96. Arginine 245 is an active-site residue. The N-linked (GlcNAc...) asparagine glycan is linked to asparagine 307. A disulfide bridge connects residues cysteine 311 and cysteine 319.

Belongs to the polysaccharide lyase 1 family.

It localises to the secreted. The catalysed reaction is Eliminative cleavage of (1-&gt;4)-alpha-D-galacturonan methyl ester to give oligosaccharides with 4-deoxy-6-O-methyl-alpha-D-galact-4-enuronosyl groups at their non-reducing ends.. Functionally, pectinolytic enzymes consist of four classes of enzymes: pectin lyase, polygalacturonase, pectin methylesterase and rhamnogalacturonase. Among pectinolytic enzymes, pectin lyase is the most important in depolymerization of pectin, since it cleaves internal glycosidic bonds of highly methylated pectins. This chain is Probable pectin lyase E (pelE), found in Aspergillus niger.